The following is a 211-amino-acid chain: Scoloptoxin SSD43 (211 aa).

A signal peptide spans 1 to 20 (MNFVIYGVIVVLTSQLYVDG).

Post-translationally, contains 3 disulfide bonds. Expressed by the venom gland.

It localises to the secreted. In terms of biological role, shows trypsin inhibiting activity. The protein is highly thermally stable, since its incubation in boiling water during 10 minutes does not reduce its activity. This is Scoloptoxin SSD43 from Scolopendra dehaani (Thai centipede).